The sequence spans 267 residues: Ubiquinone biosynthesis protein COQ4 homolog, mitochondrial (267 aa).

Zn(2+)-binding residues include histidine 170, aspartate 171, histidine 174, and glutamate 186.

It belongs to the COQ4 family. In terms of assembly, component of a multi-subunit COQ enzyme complex. Zn(2+) is required as a cofactor.

Its subcellular location is the mitochondrion inner membrane. It carries out the reaction a 4-hydroxy-3-methoxy-5-(all-trans-polyprenyl)benzoate + H(+) = a 2-methoxy-6-(all-trans-polyprenyl)phenol + CO2. It functions in the pathway cofactor biosynthesis; ubiquinone biosynthesis. In terms of biological role, lyase that catalyzes the C1-decarboxylation of 4-hydroxy-3-methoxy-5-(all-trans-polyprenyl)benzoic acid into 2-methoxy-6-(all-trans-polyprenyl)phenol during ubiquinone biosynthesis. The sequence is that of Ubiquinone biosynthesis protein COQ4 homolog, mitochondrial from Drosophila pseudoobscura pseudoobscura (Fruit fly).